The chain runs to 226 residues: Adenosine 5'-phosphosulfate reductase (226 aa).

[4Fe-4S] cluster contacts are provided by cysteine 112, cysteine 113, cysteine 195, and cysteine 198. Cysteine 221 functions as the Nucleophile; cysteine thiosulfonate intermediate in the catalytic mechanism.

It belongs to the PAPS reductase family. CysH subfamily. [4Fe-4S] cluster is required as a cofactor.

The protein resides in the cytoplasm. It carries out the reaction [thioredoxin]-disulfide + sulfite + AMP + 2 H(+) = adenosine 5'-phosphosulfate + [thioredoxin]-dithiol. It participates in sulfur metabolism; hydrogen sulfide biosynthesis; sulfite from sulfate. In terms of biological role, catalyzes the formation of sulfite from adenosine 5'-phosphosulfate (APS) using thioredoxin as an electron donor. This Bacillus anthracis (strain A0248) protein is Adenosine 5'-phosphosulfate reductase.